We begin with the raw amino-acid sequence, 664 residues long: Methionine--tRNA ligase (664 aa).

The short motif at 13 to 23 (PYTNGPCHLGH) is the 'HIGH' region element. Zn(2+) is bound by residues Cys144, Cys147, Cys156, and Cys160. The short motif at 327–331 (KFSKS) is the 'KMSKS' region element. Lys330 is a binding site for ATP. One can recognise a tRNA-binding domain in the interval 566–664 (EFAKVEMKTG…TPVPSGTKIR (99 aa)).

It belongs to the class-I aminoacyl-tRNA synthetase family. MetG type 1 subfamily. Homodimer. Requires Zn(2+) as cofactor.

The protein localises to the cytoplasm. It catalyses the reaction tRNA(Met) + L-methionine + ATP = L-methionyl-tRNA(Met) + AMP + diphosphate. Is required not only for elongation of protein synthesis but also for the initiation of all mRNA translation through initiator tRNA(fMet) aminoacylation. This Methanospirillum hungatei JF-1 (strain ATCC 27890 / DSM 864 / NBRC 100397 / JF-1) protein is Methionine--tRNA ligase.